A 201-amino-acid polypeptide reads, in one-letter code: Small ribosomal subunit protein uS4c (201 aa).

One can recognise an S4 RNA-binding domain in the interval 89–152 (MRLDNILFRL…NSRTLVQNLL (64 aa)).

Belongs to the universal ribosomal protein uS4 family. As to quaternary structure, part of the 30S ribosomal subunit. Contacts protein S5. The interaction surface between S4 and S5 is involved in control of translational fidelity.

The protein localises to the plastid. Its subcellular location is the chloroplast. In terms of biological role, one of the primary rRNA binding proteins, it binds directly to 16S rRNA where it nucleates assembly of the body of the 30S subunit. Functionally, with S5 and S12 plays an important role in translational accuracy. The sequence is that of Small ribosomal subunit protein uS4c (rps4) from Capsella bursa-pastoris (Shepherd's purse).